A 340-amino-acid polypeptide reads, in one-letter code: Glyceraldehyde-3-phosphate dehydrogenase (340 aa).

NAD(+) is bound by residues 11–12 (SI) and G111. 140–142 (SCN) is a D-glyceraldehyde 3-phosphate binding site. Catalysis depends on C141, which acts as the Nucleophile. R169 contacts NAD(+). 195 to 196 (HG) is a D-glyceraldehyde 3-phosphate binding site. Q303 is an NAD(+) binding site.

Belongs to the glyceraldehyde-3-phosphate dehydrogenase family. Homotetramer.

It localises to the cytoplasm. It catalyses the reaction D-glyceraldehyde 3-phosphate + phosphate + NADP(+) = (2R)-3-phospho-glyceroyl phosphate + NADPH + H(+). The enzyme catalyses D-glyceraldehyde 3-phosphate + phosphate + NAD(+) = (2R)-3-phospho-glyceroyl phosphate + NADH + H(+). The protein operates within carbohydrate degradation; glycolysis; pyruvate from D-glyceraldehyde 3-phosphate: step 1/5. This Methanococcus vannielii (strain ATCC 35089 / DSM 1224 / JCM 13029 / OCM 148 / SB) protein is Glyceraldehyde-3-phosphate dehydrogenase.